A 73-amino-acid polypeptide reads, in one-letter code: Long neurotoxin 2 (73 aa).

Cystine bridges form between Cys3/Cys21, Cys14/Cys42, Cys27/Cys31, Cys46/Cys57, and Cys58/Cys63.

This sequence belongs to the three-finger toxin family. Long-chain subfamily. Type II alpha-neurotoxin sub-subfamily. In terms of tissue distribution, expressed by the venom gland.

Its subcellular location is the secreted. Binds with high affinity to muscular (alpha-1/CHRNA1) and neuronal (alpha-7/CHRNA7) nicotinic acetylcholine receptor (nAChR) and inhibits acetylcholine from binding to the receptor, thereby impairing neuromuscular and neuronal transmission. This is Long neurotoxin 2 from Ophiophagus hannah (King cobra).